Reading from the N-terminus, the 466-residue chain is Adenosylhomocysteinase (466 aa).

Positions 57, 132, and 192 each coordinate substrate. 193–195 provides a ligand contact to NAD(+); it reads TTT. Substrate-binding residues include Lys222 and Asp226. NAD(+) is bound by residues Asn227, 256-261, Glu279, Asn314, 335-337, and Asn380; these read GYGDVG and IGH.

It belongs to the adenosylhomocysteinase family. NAD(+) serves as cofactor.

The protein localises to the cytoplasm. It catalyses the reaction S-adenosyl-L-homocysteine + H2O = L-homocysteine + adenosine. It functions in the pathway amino-acid biosynthesis; L-homocysteine biosynthesis; L-homocysteine from S-adenosyl-L-homocysteine: step 1/1. In terms of biological role, may play a key role in the regulation of the intracellular concentration of adenosylhomocysteine. The protein is Adenosylhomocysteinase of Mesorhizobium japonicum (strain LMG 29417 / CECT 9101 / MAFF 303099) (Mesorhizobium loti (strain MAFF 303099)).